The chain runs to 248 residues: 1-(5-phosphoribosyl)-5-[(5-phosphoribosylamino)methylideneamino] imidazole-4-carboxamide isomerase (248 aa).

The active-site Proton acceptor is the D8. The active-site Proton donor is the D129.

It belongs to the HisA/HisF family.

It localises to the cytoplasm. The catalysed reaction is 1-(5-phospho-beta-D-ribosyl)-5-[(5-phospho-beta-D-ribosylamino)methylideneamino]imidazole-4-carboxamide = 5-[(5-phospho-1-deoxy-D-ribulos-1-ylimino)methylamino]-1-(5-phospho-beta-D-ribosyl)imidazole-4-carboxamide. It functions in the pathway amino-acid biosynthesis; L-histidine biosynthesis; L-histidine from 5-phospho-alpha-D-ribose 1-diphosphate: step 4/9. This Desulfitobacterium hafniense (strain Y51) protein is 1-(5-phosphoribosyl)-5-[(5-phosphoribosylamino)methylideneamino] imidazole-4-carboxamide isomerase.